A 265-amino-acid chain; its full sequence is Glutamate racemase (265 aa).

Substrate-binding positions include 12-13 (DS) and 44-45 (YG). C75 serves as the catalytic Proton donor/acceptor. Residue 76-77 (NT) participates in substrate binding. The Proton donor/acceptor role is filled by C186. 187–188 (TH) serves as a coordination point for substrate.

The protein belongs to the aspartate/glutamate racemases family.

It catalyses the reaction L-glutamate = D-glutamate. It participates in cell wall biogenesis; peptidoglycan biosynthesis. Provides the (R)-glutamate required for cell wall biosynthesis. The chain is Glutamate racemase from Pseudomonas entomophila (strain L48).